A 404-amino-acid chain; its full sequence is uncharacterized protein (404 aa).

A run of 6 helical transmembrane segments spans residues 37 to 57 (LLILSVIAFFWGLLGVVFVQF), 92 to 112 (IYNVIFWLSQILINIPLFVLG), 122 to 142 (LLTLYFVVVSNVFGFAFSYIP), 188 to 208 (MFYALIWGFLQAVFYSVILII), 230 to 250 (IGGILFIVNTLSFLIGYTIGT), and 272 to 292 (AFFLSPNLVFTIFMNIILGIF).

It is found in the cell membrane. This is an uncharacterized protein from Mycoplasma pneumoniae (strain ATCC 29342 / M129 / Subtype 1) (Mycoplasmoides pneumoniae).